Consider the following 172-residue polypeptide: Putative phosphoesterase Bcer98_0945 (172 aa).

His34 (proton donor) is an active-site residue. 2 short sequence motifs (HXTX) span residues 34 to 37 (HITL) and 115 to 118 (HLTI). Residue His115 is the Proton acceptor of the active site.

Belongs to the 2H phosphoesterase superfamily. YjcG family.

The chain is Putative phosphoesterase Bcer98_0945 from Bacillus cytotoxicus (strain DSM 22905 / CIP 110041 / 391-98 / NVH 391-98).